Consider the following 253-residue polypeptide: Serine/threonine-protein phosphatase 3 (253 aa).

The cofactor is Mn(2+). Phosphorylated by YegI.

It catalyses the reaction O-phospho-L-seryl-[protein] + H2O = L-seryl-[protein] + phosphate. The catalysed reaction is O-phospho-L-threonyl-[protein] + H2O = L-threonyl-[protein] + phosphate. Activity dramatically decreases in the presence of the general protein phosphatase inhibitor sodium phosphate. Slightly inhibited by sodium fluoride. Activity decreases in the presence of the metal chelator EDTA. In terms of biological role, PP2C-like phosphatase that can dephosphorylate YegI. In vitro, can hydrolyze p-nitrophenyl phosphate (pNPP) to p-nitrophenol. This is Serine/threonine-protein phosphatase 3 from Escherichia coli (strain K12).